Reading from the N-terminus, the 463-residue chain is uncharacterized protein (463 aa).

It belongs to the mycobacterial PPE family.

This is an uncharacterized protein from Mycobacterium tuberculosis (strain CDC 1551 / Oshkosh).